A 157-amino-acid chain; its full sequence is Small ribosomal subunit protein uS13 (157 aa).

This sequence belongs to the universal ribosomal protein uS13 family. As to quaternary structure, part of the 30S ribosomal subunit. Forms a loose heterodimer with protein S19. Forms two bridges to the 50S subunit in the 70S ribosome.

In terms of biological role, located at the top of the head of the 30S subunit, it contacts several helices of the 16S rRNA. In the 70S ribosome it contacts the 23S rRNA (bridge B1a) and protein L5 of the 50S subunit (bridge B1b), connecting the 2 subunits; these bridges are implicated in subunit movement. In Thermofilum pendens (strain DSM 2475 / Hrk 5), this protein is Small ribosomal subunit protein uS13.